A 140-amino-acid polypeptide reads, in one-letter code: Peptide methionine sulfoxide reductase MsrB (140 aa).

One can recognise a MsrB domain in the interval 10 to 132; that stretch reads EEDWKSVLTP…NSVSLGFTKE (123 aa). Zn(2+) contacts are provided by C49, C52, C98, and C101. C121 serves as the catalytic Nucleophile.

It belongs to the MsrB Met sulfoxide reductase family. Requires Zn(2+) as cofactor.

The catalysed reaction is L-methionyl-[protein] + [thioredoxin]-disulfide + H2O = L-methionyl-(R)-S-oxide-[protein] + [thioredoxin]-dithiol. This Methanosarcina mazei (strain ATCC BAA-159 / DSM 3647 / Goe1 / Go1 / JCM 11833 / OCM 88) (Methanosarcina frisia) protein is Peptide methionine sulfoxide reductase MsrB.